A 211-amino-acid chain; its full sequence is Ribosomal RNA small subunit methyltransferase G (211 aa).

S-adenosyl-L-methionine is bound by residues Gly72, Phe77, 125–126 (IE), and Arg141.

Belongs to the methyltransferase superfamily. RNA methyltransferase RsmG family.

The protein localises to the cytoplasm. The enzyme catalyses guanosine(527) in 16S rRNA + S-adenosyl-L-methionine = N(7)-methylguanosine(527) in 16S rRNA + S-adenosyl-L-homocysteine. Its function is as follows. Specifically methylates the N7 position of guanine in position 527 of 16S rRNA. This chain is Ribosomal RNA small subunit methyltransferase G, found in Allorhizobium ampelinum (strain ATCC BAA-846 / DSM 112012 / S4) (Agrobacterium vitis (strain S4)).